A 577-amino-acid polypeptide reads, in one-letter code: Gamma-tubulin complex component gfh1 (577 aa).

This sequence belongs to the TUBGCP family.

Its subcellular location is the cytoplasm. It is found in the cytoskeleton. The protein localises to the microtubule organizing center. It localises to the spindle pole body. Functionally, required for proper anchoring of astral microtubules at the spindle pole bodies (SPBs), during anaphase, ensuring correct cell polarity. The sequence is that of Gamma-tubulin complex component gfh1 (gfh1) from Schizosaccharomyces pombe (strain 972 / ATCC 24843) (Fission yeast).